A 123-amino-acid polypeptide reads, in one-letter code: Nitrogen regulatory protein GlnK2 (123 aa).

ATP contacts are provided by residues 38–40 and Ser-49; that span reads SLT. Ser-49 is an ADP binding site. Residue Tyr-62 is modified to O-UMP-tyrosine. ATP is bound by residues Val-75, 98–101, and Arg-114; that span reads GDGK. 98–101 lines the ADP pocket; that stretch reads GDGK. 98–101 lines the AMP pocket; sequence GDGK.

This sequence belongs to the P(II) protein family. In terms of assembly, homotrimer. Interacts with the glutamine synthetase 3 (GS3) in the presence of 2-oxoglutarate. Interacts in vitro with Amt1 after ammonium shock. May also interact with Amt2. Post-translationally, uridylylated on Tyr-62.

The protein resides in the cytoplasm. With respect to regulation, binds the effectors ADP and ATP. Also binds AMP with high affinity, raising the possibility that AMP could be an important PII effector, at least in archaea. The change in the ATP/AMP ratio may be more relevant for describing the energy status in the cells than the ATP/ADP ratio alone. Functionally, involved in the regulation of nitrogen metabolism. Regulates the activity of its targets by protein-protein interaction in response to the nitrogen status of the cell. Increases the activity of the glutamine synthetase 3 in the presence of 2-oxoglutarate. May regulate the activity of the ammonia channel Amt2 via direct interaction. The chain is Nitrogen regulatory protein GlnK2 from Haloferax mediterranei (strain ATCC 33500 / DSM 1411 / JCM 8866 / NBRC 14739 / NCIMB 2177 / R-4) (Halobacterium mediterranei).